Here is a 170-residue protein sequence, read N- to C-terminus: Zinc finger matrin-type protein 5 (170 aa).

The C3H1-type zinc finger occupies 51 to 79 (EQNKRPCRKFLLTGQCDFGSNCRFSHMSE). Residues 150–170 (PPSLRAPPPGGWPLQPRVQWG) are disordered.

In terms of assembly, component of the U11/U12 snRNPs that are part of the U12-type spliceosome. Not found in the major spliceosome.

It is found in the nucleus. The protein is Zinc finger matrin-type protein 5 (ZMAT5) of Homo sapiens (Human).